The following is a 259-amino-acid chain: Thiazole synthase (259 aa).

The active-site Schiff-base intermediate with DXP is the Lys-102. Residues Gly-163, 189–190, and 211–212 each bind 1-deoxy-D-xylulose 5-phosphate; these read AG and NT.

The protein belongs to the ThiG family. As to quaternary structure, homotetramer. Forms heterodimers with either ThiH or ThiS.

The protein localises to the cytoplasm. It catalyses the reaction [ThiS sulfur-carrier protein]-C-terminal-Gly-aminoethanethioate + 2-iminoacetate + 1-deoxy-D-xylulose 5-phosphate = [ThiS sulfur-carrier protein]-C-terminal Gly-Gly + 2-[(2R,5Z)-2-carboxy-4-methylthiazol-5(2H)-ylidene]ethyl phosphate + 2 H2O + H(+). It functions in the pathway cofactor biosynthesis; thiamine diphosphate biosynthesis. In terms of biological role, catalyzes the rearrangement of 1-deoxy-D-xylulose 5-phosphate (DXP) to produce the thiazole phosphate moiety of thiamine. Sulfur is provided by the thiocarboxylate moiety of the carrier protein ThiS. In vitro, sulfur can be provided by H(2)S. The chain is Thiazole synthase from Novosphingobium aromaticivorans (strain ATCC 700278 / DSM 12444 / CCUG 56034 / CIP 105152 / NBRC 16084 / F199).